The following is a 240-amino-acid chain: UDP-2,3-diacylglucosamine hydrolase (240 aa).

Mn(2+) is bound by residues aspartate 8, histidine 10, aspartate 41, asparagine 78, and histidine 113. Position 78–79 (78–79 (NR)) interacts with substrate. Residues aspartate 121, serine 159, asparagine 163, lysine 166, and histidine 194 each contribute to the substrate site. Mn(2+)-binding residues include histidine 194 and histidine 196.

Belongs to the LpxH family. The cofactor is Mn(2+).

It is found in the cell inner membrane. The enzyme catalyses UDP-2-N,3-O-bis[(3R)-3-hydroxytetradecanoyl]-alpha-D-glucosamine + H2O = 2-N,3-O-bis[(3R)-3-hydroxytetradecanoyl]-alpha-D-glucosaminyl 1-phosphate + UMP + 2 H(+). Its pathway is glycolipid biosynthesis; lipid IV(A) biosynthesis; lipid IV(A) from (3R)-3-hydroxytetradecanoyl-[acyl-carrier-protein] and UDP-N-acetyl-alpha-D-glucosamine: step 4/6. Hydrolyzes the pyrophosphate bond of UDP-2,3-diacylglucosamine to yield 2,3-diacylglucosamine 1-phosphate (lipid X) and UMP by catalyzing the attack of water at the alpha-P atom. Involved in the biosynthesis of lipid A, a phosphorylated glycolipid that anchors the lipopolysaccharide to the outer membrane of the cell. The protein is UDP-2,3-diacylglucosamine hydrolase of Shewanella baltica (strain OS155 / ATCC BAA-1091).